The sequence spans 314 residues: Malate dehydrogenase (314 aa).

NAD(+) is bound by residues 11-16 (GSGNIG) and D35. R84 and R90 together coordinate substrate. NAD(+)-binding positions include N97 and 120-122 (ITN). Substrate-binding residues include N122 and R153. The Proton acceptor role is filled by H177.

Belongs to the LDH/MDH superfamily. MDH type 3 family.

The catalysed reaction is (S)-malate + NAD(+) = oxaloacetate + NADH + H(+). Functionally, catalyzes the reversible oxidation of malate to oxaloacetate. This chain is Malate dehydrogenase, found in Rickettsia bellii (strain OSU 85-389).